A 444-amino-acid polypeptide reads, in one-letter code: Ribulose bisphosphate carboxylase (444 aa).

Lys163 serves as the catalytic Proton acceptor. Lys165 is a substrate binding site. The Mg(2+) site is built by Lys189, Asp191, and Glu192. Lys189 is modified (N6-carboxylysine). The active-site Proton acceptor is the His281. Substrate-binding positions include Arg282, His314, 367–369 (SGG), and 389–392 (QLGG).

The protein belongs to the RuBisCO large chain family. Type III subfamily. Homodecamer, consisting of five dimer units which form a ring-like pentagonal structure. This arrangement is essential for its high thermostability. In contrast to form I RuBisCO, the form III RuBisCO is composed solely of large subunits. Mg(2+) is required as a cofactor.

The enzyme catalyses 2 (2R)-3-phosphoglycerate + 2 H(+) = D-ribulose 1,5-bisphosphate + CO2 + H2O. It catalyses the reaction D-ribulose 1,5-bisphosphate + O2 = 2-phosphoglycolate + (2R)-3-phosphoglycerate + 2 H(+). Its function is as follows. Catalyzes the addition of molecular CO(2) and H(2)O to ribulose 1,5-bisphosphate (RuBP), generating two molecules of 3-phosphoglycerate (3-PGA). Functions in an archaeal AMP degradation pathway, together with AMP phosphorylase and R15P isomerase. This is Ribulose bisphosphate carboxylase from Thermococcus kodakarensis (strain ATCC BAA-918 / JCM 12380 / KOD1) (Pyrococcus kodakaraensis (strain KOD1)).